The following is a 222-amino-acid chain: uncharacterized protein (222 aa).

It belongs to the ycf73 family.

It is found in the plastid. The protein localises to the chloroplast. This is an uncharacterized protein from Oryza nivara (Indian wild rice).